The sequence spans 201 residues: FMN-dependent NADH:quinone oxidoreductase (201 aa).

FMN-binding positions include serine 9 and 16 to 18; that span reads SYS.

It belongs to the azoreductase type 1 family. In terms of assembly, homodimer. It depends on FMN as a cofactor.

The catalysed reaction is 2 a quinone + NADH + H(+) = 2 a 1,4-benzosemiquinone + NAD(+). The enzyme catalyses N,N-dimethyl-1,4-phenylenediamine + anthranilate + 2 NAD(+) = 2-(4-dimethylaminophenyl)diazenylbenzoate + 2 NADH + 2 H(+). In terms of biological role, quinone reductase that provides resistance to thiol-specific stress caused by electrophilic quinones. Its function is as follows. Also exhibits azoreductase activity. Catalyzes the reductive cleavage of the azo bond in aromatic azo compounds to the corresponding amines. The sequence is that of FMN-dependent NADH:quinone oxidoreductase from Mesomycoplasma hyopneumoniae (strain J / ATCC 25934 / NCTC 10110) (Mycoplasma hyopneumoniae).